The chain runs to 169 residues: Putative antitoxin Rv0268c (169 aa).

The span at 1-11 (MGTRSKSRTRQ) shows a compositional bias: basic residues. The interval 1-35 (MGTRSKSRTRQLKQSNGCTATTSGASDRRRRARRR) is disordered. Residues 120–153 (AAILISAERYESLMEELEDLRDRLSVHEREHVTM) adopt a coiled-coil conformation.

It belongs to the phD/YefM antitoxin family.

In terms of biological role, putative antitoxin component of a type II toxin-antitoxin (TA) system; however the expected toxin coding sequence is not found adjacent to this gene. The sequence is that of Putative antitoxin Rv0268c from Mycobacterium tuberculosis (strain ATCC 25618 / H37Rv).